The following is a 101-amino-acid chain: Small ribosomal subunit protein uS14 (101 aa).

This sequence belongs to the universal ribosomal protein uS14 family. Part of the 30S ribosomal subunit. Contacts proteins S3 and S10.

Functionally, binds 16S rRNA, required for the assembly of 30S particles and may also be responsible for determining the conformation of the 16S rRNA at the A site. The protein is Small ribosomal subunit protein uS14 of Francisella tularensis subsp. novicida (strain U112).